The primary structure comprises 593 residues: MMSGAAHSVRKGISCPTQDPNCTRIVESLSAWNDSVMSAYRLVDLPPTTTTTTSVAMVEESVYPFPTVDVPDHAHYTIGAVILTVGITGMLGNFLVIYAFSRSRTLRTPANLFIINLAITDFLMCATQAPIFFTTSMHKRWIFGEKGCELYAFCGALFGICSMITLMVIAVDRYFVITRPLASIGVLSQKRALLILLVAWVYSLGWSLPPFFGWSAYVPEGLLTSCTWDYMTFTPSVRAYTMLLFIFVFFIPLIVIIYCYFFIFRSIRTTNEAVGKINGDNKRDSMKRFQRLKNEWKMAKIALIVILMYVISWSPYSTVALTAFAGYSDFLTPYMNSVPAVIAKASAIHNPIIYAITHPKYRLAIAKYIPCLRLLLCVPKRDLHSFHSSLMSTRRSTVTSQSSDMSGRFRRTSTGKSRLSSASDSESGWTDTEADLSSMSSRPASRQVSCDISKDTAEMPDFKPCNSSSFKSKLKSHDSGIFEKSSSDVDDVSVAGIIQPDRTLTNAGDITDVPISRGAIGRIPSIVITSESSSLLPSVRPTYRISRSNVSTVGTNPARRDSRGGVQQGAAHLSNAAETPESGHIDNHRPQYL.

At 1–77 the chain is on the extracellular side; it reads MMSGAAHSVR…VDVPDHAHYT (77 aa). Residues 78–98 form a helical membrane-spanning segment; that stretch reads IGAVILTVGITGMLGNFLVIY. Residues 99–112 are Cytoplasmic-facing; sequence AFSRSRTLRTPANL. A helical transmembrane segment spans residues 113 to 133; the sequence is FIINLAITDFLMCATQAPIFF. Over 134–150 the chain is Extracellular; sequence TTSMHKRWIFGEKGCEL. Cysteine 148 and cysteine 226 are joined by a disulfide. The chain crosses the membrane as a helical span at residues 151–171; it reads YAFCGALFGICSMITLMVIAV. The Cytoplasmic portion of the chain corresponds to 172-191; the sequence is DRYFVITRPLASIGVLSQKR. A helical membrane pass occupies residues 192-212; sequence ALLILLVAWVYSLGWSLPPFF. The Extracellular segment spans residues 213-243; the sequence is GWSAYVPEGLLTSCTWDYMTFTPSVRAYTML. Residues 244–264 form a helical membrane-spanning segment; sequence LFIFVFFIPLIVIIYCYFFIF. Residues 265 to 300 lie on the Cytoplasmic side of the membrane; the sequence is RSIRTTNEAVGKINGDNKRDSMKRFQRLKNEWKMAK. A helical membrane pass occupies residues 301 to 321; sequence IALIVILMYVISWSPYSTVAL. Over 322-336 the chain is Extracellular; it reads TAFAGYSDFLTPYMN. A helical membrane pass occupies residues 337 to 357; sequence SVPAVIAKASAIHNPIIYAIT. An N6-(retinylidene)lysine modification is found at lysine 344. Topologically, residues 358–593 are cytoplasmic; it reads HPKYRLAIAK…HIDNHRPQYL (236 aa). Disordered stretches follow at residues 397–449 and 547–593; these read TVTS…RQVS and RSNV…PQYL. Residues 414–449 show a composition bias toward polar residues; it reads TGKSRLSSASDSESGWTDTEADLSSMSSRPASRQVS. The segment covering 581–593 has biased composition (basic and acidic residues); that stretch reads ESGHIDNHRPQYL.

The protein belongs to the G-protein coupled receptor 1 family. Opsin subfamily.

The protein resides in the cell membrane. In terms of biological role, photoreceptor implicated in non-image-forming responses to light. May be able to isomerize covalently bound all-trans retinal back to 11-cis retinal. The chain is Melanopsin-A (opn4a) from Danio rerio (Zebrafish).